Reading from the N-terminus, the 485-residue chain is Hydrogenase transcriptional regulatory protein HoxA (485 aa).

The Response regulatory domain occupies 6–120; that stretch reads TILVVDDEVR…QLVETVKEAV (115 aa). Position 54 is a 4-aspartylphosphate (Asp-54). Positions 166-392 constitute a Sigma-54 factor interaction domain; it reads STESPMHAVI…ELQNEIQRMA (227 aa). Residues 192 to 199 and 264 to 273 contribute to the ATP site; these read GESGTGKE and EIGETSPAFQ. A disordered region spans residues 404-426; sequence PLLGRRNGKRSAPLPAHGRLNGS. Positions 451–470 form a DNA-binding region, H-T-H motif; that stretch reads NISRVASELGLSRVGLRNKL.

It is found in the cytoplasm. Probable member of the two-component regulatory system involved in the regulation of the hydrogenase activity. HoxA is probably phosphorylated by a sensory component (which could be HoxX) and then acts in conjunction with sigma-54 as a transcriptional activator. The sequence is that of Hydrogenase transcriptional regulatory protein HoxA (hoxA) from Bradyrhizobium diazoefficiens (strain JCM 10833 / BCRC 13528 / IAM 13628 / NBRC 14792 / USDA 110).